Here is a 197-residue protein sequence, read N- to C-terminus: Putative peptidyl-prolyl cis-trans isomerase (197 aa).

Residues 14 to 195 (NEIKLIMHTN…HDITIDSIEI (182 aa)) enclose the PPIase cyclophilin-type domain.

Belongs to the cyclophilin-type PPIase family.

The enzyme catalyses [protein]-peptidylproline (omega=180) = [protein]-peptidylproline (omega=0). Functionally, PPIases accelerate the folding of proteins. It catalyzes the cis-trans isomerization of proline imidic peptide bonds in oligopeptides. The protein is Putative peptidyl-prolyl cis-trans isomerase of Staphylococcus saprophyticus subsp. saprophyticus (strain ATCC 15305 / DSM 20229 / NCIMB 8711 / NCTC 7292 / S-41).